Here is a 977-residue protein sequence, read N- to C-terminus: Synaptopodin 2-like protein (977 aa).

The region spanning 6 to 88 (EVLVTLSGGA…QLVLTVQRLA (83 aa)) is the PDZ domain. 3 disordered regions span residues 91-226 (GPVQ…GPLR), 317-352 (AGTG…QSDW), and 364-677 (AGSR…EDAL). Phosphoserine is present on residues serine 108 and serine 111. Pro residues predominate over residues 109-123 (PLSPEPPGAPVPQPL). Threonine 141 is subject to Phosphothreonine. 3 positions are modified to phosphoserine: serine 143, serine 178, and serine 180. Residues 183–192 (EPAPTIPGPP) show a composition bias toward pro residues. A compositionally biased stretch (polar residues) spans 194–203 (QGDSRVSSPS). The span at 216 to 226 (EALLLPHGPLR) shows a compositional bias: low complexity. 5 positions are modified to phosphoserine: serine 345, serine 350, serine 374, serine 381, and serine 384. Position 386 is an omega-N-methylarginine (arginine 386). Residues 436–450 (PPSPLPAPVASPRPF) show a composition bias toward pro residues. Residues arginine 466, arginine 469, and arginine 479 each carry the omega-N-methylarginine modification. A compositionally biased stretch (polar residues) spans 510–525 (LSSQGPTPLPSFTSGV). Composition is skewed to low complexity over residues 530-545 (PVSG…GPVT) and 572-595 (SAAA…ARPE). Residues 596 to 607 (APAPGPGAPEPP) are compositionally biased toward pro residues. Serine 670 and serine 678 each carry phosphoserine. A disordered region spans residues 697–802 (TLPHVTPKTP…PSLPPSWKYS (106 aa)). Over residues 704-730 (KTPPPMAPKTPPPMTPKTPPPVAPKPP) the composition is skewed to pro residues. Residues threonine 705 and threonine 713 each carry the phosphothreonine modification. Residue arginine 757 is modified to Omega-N-methylarginine. A compositionally biased stretch (pro residues) spans 781-796 (GLGPRPRSPSPTPSLP). Phosphoserine occurs at positions 788 and 790. Residue threonine 792 is modified to Phosphothreonine. An omega-N-methylarginine mark is found at arginine 806, arginine 826, and arginine 889. A Phosphoserine modification is found at serine 891. Phosphothreonine occurs at positions 892 and 898. The residue at position 910 (arginine 910) is an Omega-N-methylarginine. The residue at position 921 (arginine 921) is an Asymmetric dimethylarginine; alternate. The residue at position 921 (arginine 921) is an Omega-N-methylarginine; alternate. The tract at residues 922-950 (TELASAPVPSPAPPPEAPRGLGASPSSCG) is disordered. Residues 929-938 (VPSPAPPPEA) show a composition bias toward pro residues. An omega-N-methylarginine mark is found at arginine 955 and arginine 957.

The protein belongs to the synaptopodin family.

The protein resides in the cytoplasm. Its subcellular location is the cytoskeleton. Its function is as follows. Actin-associated protein that may play a role in modulating actin-based shape. The protein is Synaptopodin 2-like protein (SYNPO2L) of Homo sapiens (Human).